The sequence spans 508 residues: Putative POTE ankyrin domain family member M (508 aa).

5 ANK repeats span residues 172–201 (QKRT…QLNI), 205–234 (KKRT…DPNI), 238–267 (YGNT…DIES), 271–300 (HGLT…NLNA), and 304–333 (YGRT…DVSS). A disordered region spans residues 369-487 (SSENSNPEQD…KQLSEEQNTG (119 aa)). Composition is skewed to basic and acidic residues over residues 377–392 (QDLK…RLKG) and 406–421 (EINK…EMKK). The span at 476 to 487 (TQKQLSEEQNTG) shows a compositional bias: polar residues.

Belongs to the POTE family.

This chain is Putative POTE ankyrin domain family member M (POTEM), found in Homo sapiens (Human).